The sequence spans 815 residues: 1,4-alpha-glucan branching enzyme GlgB (815 aa).

The Nucleophile role is filled by Asp405. Catalysis depends on Glu458, which acts as the Proton donor.

The protein belongs to the glycosyl hydrolase 13 family. GlgB subfamily. In terms of assembly, monomer.

The catalysed reaction is Transfers a segment of a (1-&gt;4)-alpha-D-glucan chain to a primary hydroxy group in a similar glucan chain.. It functions in the pathway glycan biosynthesis; glycogen biosynthesis. In terms of biological role, catalyzes the formation of the alpha-1,6-glucosidic linkages in glycogen by scission of a 1,4-alpha-linked oligosaccharide from growing alpha-1,4-glucan chains and the subsequent attachment of the oligosaccharide to the alpha-1,6 position. In Histophilus somni (strain 2336) (Haemophilus somnus), this protein is 1,4-alpha-glucan branching enzyme GlgB.